A 350-amino-acid chain; its full sequence is uncharacterized protein (350 aa).

The N-terminal stretch at 1 to 27 (MKNKKRVLIASSLSCAILLLSAATTQA) is a signal peptide. The segment at 28–71 (NSAHKDSQDQNKKEHVDKSQQKEKRNVTNKDKNSTVPDDIGKNG) is disordered. Positions 30–60 (AHKDSQDQNKKEHVDKSQQKEKRNVTNKDKN) are enriched in basic and acidic residues.

This sequence belongs to the aerolysin family.

This is an uncharacterized protein from Staphylococcus aureus (strain MSSA476).